Consider the following 224-residue polypeptide: Proteasome subunit beta (224 aa).

A propeptide spans 1-6 (MDVMKG) (removed in mature form; by autocatalysis). The active-site Nucleophile is T7.

Belongs to the peptidase T1B family. The 20S proteasome core is composed of 14 alpha and 14 beta subunits that assemble into four stacked heptameric rings, resulting in a barrel-shaped structure. The two inner rings, each composed of seven catalytic beta subunits, are sandwiched by two outer rings, each composed of seven alpha subunits. The catalytic chamber with the active sites is on the inside of the barrel. Has a gated structure, the ends of the cylinder being occluded by the N-termini of the alpha-subunits. Is capped at one or both ends by the proteasome regulatory ATPase, PAN.

The protein localises to the cytoplasm. The catalysed reaction is Cleavage of peptide bonds with very broad specificity.. With respect to regulation, the formation of the proteasomal ATPase PAN-20S proteasome complex, via the docking of the C-termini of PAN into the intersubunit pockets in the alpha-rings, triggers opening of the gate for substrate entry. Interconversion between the open-gate and close-gate conformations leads to a dynamic regulation of the 20S proteasome proteolysis activity. Its function is as follows. Component of the proteasome core, a large protease complex with broad specificity involved in protein degradation. The chain is Proteasome subunit beta from Methanocaldococcus fervens (strain DSM 4213 / JCM 15782 / AG86) (Methanococcus fervens).